Here is a 180-residue protein sequence, read N- to C-terminus: Minor allergen Can f 2 (180 aa).

A signal peptide spans 1 to 18 (MQLLLLTVGLALICGLQA). Residue asparagine 45 is glycosylated (N-linked (GlcNAc...) asparagine). An intrachain disulfide couples cysteine 82 to cysteine 175.

Belongs to the calycin superfamily. Lipocalin family. As to expression, tongue epithelial tissue and parotid gland.

Its subcellular location is the secreted. In Canis lupus familiaris (Dog), this protein is Minor allergen Can f 2.